An 85-amino-acid chain; its full sequence is Small ribosomal subunit protein bS20 (85 aa).

The protein belongs to the bacterial ribosomal protein bS20 family.

Functionally, binds directly to 16S ribosomal RNA. The sequence is that of Small ribosomal subunit protein bS20 from Cytophaga hutchinsonii (strain ATCC 33406 / DSM 1761 / CIP 103989 / NBRC 15051 / NCIMB 9469 / D465).